Reading from the N-terminus, the 663-residue chain is Rho GTPase-activating protein 18 (663 aa).

Disordered stretches follow at residues 14–73 (AYHP…DESM) and 85–106 (RSNE…DEGE). A compositionally biased stretch (basic and acidic residues) spans 27–37 (SHVKGGDEATS). A compositionally biased stretch (polar residues) spans 38 to 51 (SRRYGQYTINQEGS). Ser-65 and Ser-68 each carry phosphoserine. Residues 85-102 (RSNENRQEGQEAIVVKEP) show a composition bias toward basic and acidic residues. Thr-156 bears the Phosphothreonine mark. 2 disordered regions span residues 173–228 (FAQQ…PASE) and 245–277 (KEFS…TRIG). 2 stretches are compositionally biased toward basic and acidic residues: residues 178–205 (EAQE…KDDQ) and 212–222 (DSKEQISRVPE). 2 positions are modified to phosphoserine: Ser-260 and Ser-263. The region spanning 324-523 (IPLTILLEQD…LLIRYQKILW (200 aa)) is the Rho-GAP domain. The residue at position 610 (Ser-610) is a Phosphoserine.

In terms of assembly, interacts with MPHOSPH6. As to expression, widely expressed: expressed in most organs, except small intestine.

The protein localises to the cytoplasm. Its function is as follows. Rho GTPase activating protein that suppresses F-actin polymerization by inhibiting Rho. Rho GTPase activating proteins act by converting Rho-type GTPases to an inactive GDP-bound state. Plays a key role in tissue tension and 3D tissue shape by regulating cortical actomyosin network formation. Acts downstream of YAP1 and inhibits actin polymerization, which in turn reduces nuclear localization of YAP1. Regulates cell shape, spreading, and migration. The sequence is that of Rho GTPase-activating protein 18 from Mus musculus (Mouse).